A 254-amino-acid chain; its full sequence is Proteasome subunit alpha (254 aa).

The interval glutamate 234–serine 254 is disordered.

Belongs to the peptidase T1A family. In terms of assembly, the 20S proteasome core is composed of 14 alpha and 14 beta subunits that assemble into four stacked heptameric rings, resulting in a barrel-shaped structure. The two inner rings, each composed of seven catalytic beta subunits, are sandwiched by two outer rings, each composed of seven alpha subunits. The catalytic chamber with the active sites is on the inside of the barrel. Has a gated structure, the ends of the cylinder being occluded by the N-termini of the alpha-subunits. Is capped by the proteasome-associated ATPase, ARC.

The protein localises to the cytoplasm. It functions in the pathway protein degradation; proteasomal Pup-dependent pathway. Its activity is regulated as follows. The formation of the proteasomal ATPase ARC-20S proteasome complex, likely via the docking of the C-termini of ARC into the intersubunit pockets in the alpha-rings, may trigger opening of the gate for substrate entry. Interconversion between the open-gate and close-gate conformations leads to a dynamic regulation of the 20S proteasome proteolysis activity. Its function is as follows. Component of the proteasome core, a large protease complex with broad specificity involved in protein degradation. The sequence is that of Proteasome subunit alpha from Rhodococcus erythropolis (strain PR4 / NBRC 100887).